Consider the following 454-residue polypeptide: Growth/differentiation factor 6 (454 aa).

A signal peptide spans 1–22; sequence MDTPRVLLWAIFLISFLWDLPG. The propeptide occupies 23-334; that stretch reads FQQASISSSS…LPSPGRRRRR (312 aa). The tract at residues 28 to 93 is disordered; it reads ISSSSSSSTE…QGQEPPGRGL (66 aa). Composition is skewed to basic and acidic residues over residues 39–52 and 60–73; these read DSTKDVGNRKEGKM and AEGRTPPEHGLRQK. Positions 81 to 92 are enriched in low complexity; it reads GQHQGQEPPGRG. Residue asparagine 117 is glycosylated (N-linked (GlcNAc...) asparagine). Disordered regions lie at residues 247–268 and 303–350; these read DTGARARGPQQPPPLDLRSLGF and AEAA…KKSR. Low complexity predominate over residues 303-319; that stretch reads AEAAGAEGSWPAPSGSP. The span at 329 to 350 shows a compositional bias: basic residues; it reads GRRRRRTAFASRHGKRHGKKSR. 3 cysteine pairs are disulfide-bonded: cysteine 353–cysteine 419, cysteine 382–cysteine 451, and cysteine 386–cysteine 453.

This sequence belongs to the TGF-beta family. In terms of assembly, homodimer; disulfide-linked. In terms of tissue distribution, expressed in different subsets of developing joints. Highly expressed in the cochlea.

Its subcellular location is the secreted. Its function is as follows. Growth factor that controls proliferation and cellular differentiation in the retina and bone formation. Plays a key role in regulating apoptosis during retinal development. Establishes dorsal-ventral positional information in the retina and controls the formation of the retinotectal map. Required for normal formation of bones and joints in the limbs, skull, digits and axial skeleton. Plays a key role in establishing boundaries between skeletal elements during development. Regulation of GDF6 expression seems to be a mechanism for evolving species-specific changes in skeletal structures. Seems to positively regulate differentiation of chondrogenic tissue through the growth factor receptors subunits BMPR1A, BMPR1B, BMPR2 and ACVR2A, leading to the activation of SMAD1-SMAD5-SMAD8 complex. The regulation of chondrogenic differentiation is inhibited by NOG. Also involved in the induction of adipogenesis from mesenchymal stem cells. This mechanism acts through the growth factor receptors subunits BMPR1A, BMPR2 and ACVR2A and the activation of SMAD1-SMAD5-SMAD8 complex and MAPK14/p38. The sequence is that of Growth/differentiation factor 6 (Gdf6) from Mus musculus (Mouse).